The sequence spans 104 residues: Large ribosomal subunit protein uL24 (104 aa).

The protein belongs to the universal ribosomal protein uL24 family. In terms of assembly, part of the 50S ribosomal subunit.

Its function is as follows. One of two assembly initiator proteins, it binds directly to the 5'-end of the 23S rRNA, where it nucleates assembly of the 50S subunit. One of the proteins that surrounds the polypeptide exit tunnel on the outside of the subunit. In Saccharopolyspora erythraea (strain ATCC 11635 / DSM 40517 / JCM 4748 / NBRC 13426 / NCIMB 8594 / NRRL 2338), this protein is Large ribosomal subunit protein uL24.